A 196-amino-acid chain; its full sequence is Nucleotide kinase gp1.7 (196 aa).

The tract at residues 97-118 is disordered; sequence PRKPHLNKPEVTPTDDQPSAET.

Dodecamer.

It catalyses the reaction dGMP + ATP = dGDP + ADP. The enzyme catalyses dTMP + ATP = dTDP + ADP. Functionally, nucleotide kinase that catalyzes the phosphorylation of dGMP and dTMP to dGDP and dTDP. A double mutation in this protein and the RecBCD inhibitor gp5.9 protein allow phage to overcome the retron Ec48 bacteriophage defense system. This protein alone when overexpressed in E.coli does not cause growth arrest; Y128C may be a silent mutation. This Escherichia coli (Bacteriophage T7) protein is Nucleotide kinase gp1.7.